A 361-amino-acid polypeptide reads, in one-letter code: Glutaminyl-peptide cyclotransferase (361 aa).

An N-terminal signal peptide occupies residues 1–28; it reads MAGCRDPRVVDTLHLLLLVAVLPLAVSG. An N-linked (GlcNAc...) asparagine glycan is attached at asparagine 49. Cysteine 139 and cysteine 164 are joined by a disulfide. Aspartate 159 contacts Zn(2+). A glycan (N-linked (GlcNAc...) asparagine) is linked at asparagine 183. Glutamate 201 acts as the Proton acceptor in catalysis. Glutamate 202 provides a ligand contact to Zn(2+). Aspartate 248 acts as the Proton acceptor in catalysis. Histidine 330 serves as a coordination point for Zn(2+).

It belongs to the glutaminyl-peptide cyclotransferase family. Expressed mainly in brain tissue.

The protein resides in the secreted. The enzyme catalyses N-terminal L-glutaminyl-[peptide] = N-terminal 5-oxo-L-prolyl-[peptide] + NH4(+). Responsible for the biosynthesis of pyroglutamyl peptides. Has a bias against acidic and tryptophan residues adjacent to the N-terminal glutaminyl residue and a lack of importance of chain length after the second residue. Also catalyzes N-terminal pyroglutamate formation. This is Glutaminyl-peptide cyclotransferase (QPCT) from Bos taurus (Bovine).